The sequence spans 655 residues: WD repeat-containing protein 70 (655 aa).

Disordered regions lie at residues 1–24 (MEHS…LAVT) and 43–170 (FEQT…PIHR). Residues 45–78 (QTRRTAVERSRKTLEAREKEEEMNREKELRKQLE) are compositionally biased toward basic and acidic residues. Residues 99–112 (RDTSSSDSDHSSGS) show a composition bias toward low complexity. Positions 148-165 (EEGEDDDDDDLEDEGEED) are enriched in acidic residues. 7 WD repeats span residues 181 to 220 (HGTK…ASFK), 228 to 269 (CECH…ECIK), 282 to 322 (GHTA…KQKS), 331 to 370 (GKKV…HPKF), 377 to 416 (APGT…KPLF), 422 to 467 (PTLF…RVYE), and 470 to 509 (ITDA…QRGA). Residue Lys-297 forms a Glycyl lysine isopeptide (Lys-Gly) (interchain with G-Cter in SUMO2) linkage. N6-acetyllysine is present on Lys-453. Over residues 541-566 (REPRQRSTRKQLEKDRLDPLKSHKPE) the composition is skewed to basic and acidic residues. Residues 541 to 582 (REPRQRSTRKQLEKDRLDPLKSHKPEPPVAGPGRGGRVGTHG) are disordered. The segment covering 572–582 (PGRGGRVGTHG) has biased composition (gly residues). Thr-580 is subject to Phosphothreonine. Glycyl lysine isopeptide (Lys-Gly) (interchain with G-Cter in SUMO2) cross-links involve residues Lys-591 and Lys-597. Residues Ser-622 and Ser-639 each carry the phosphoserine modification. Positions 632–655 (TMFAQVESDDEESKNEPEWKKRKI) are disordered. Over residues 645–655 (KNEPEWKKRKI) the composition is skewed to basic and acidic residues.

The protein belongs to the WD repeat GAD-1 family.

The polypeptide is WD repeat-containing protein 70 (Wdr70) (Rattus norvegicus (Rat)).